Here is a 394-residue protein sequence, read N- to C-terminus: Anhydro-N-acetylmuramic acid kinase (394 aa).

An ATP-binding site is contributed by 11-18; sequence GTSADGID.

The protein belongs to the anhydro-N-acetylmuramic acid kinase family.

The enzyme catalyses 1,6-anhydro-N-acetyl-beta-muramate + ATP + H2O = N-acetyl-D-muramate 6-phosphate + ADP + H(+). It functions in the pathway amino-sugar metabolism; 1,6-anhydro-N-acetylmuramate degradation. The protein operates within cell wall biogenesis; peptidoglycan recycling. Functionally, catalyzes the specific phosphorylation of 1,6-anhydro-N-acetylmuramic acid (anhMurNAc) with the simultaneous cleavage of the 1,6-anhydro ring, generating MurNAc-6-P. Is required for the utilization of anhMurNAc either imported from the medium or derived from its own cell wall murein, and thus plays a role in cell wall recycling. The chain is Anhydro-N-acetylmuramic acid kinase from Deinococcus geothermalis (strain DSM 11300 / CIP 105573 / AG-3a).